The sequence spans 158 residues: Transcription factor BTF3 homolog 4 (158 aa).

Lysine 5 carries the post-translational modification N6-methyllysine. The NAC-A/B domain occupies 33–98 (TADDKKLQSS…AEAKPITEML (66 aa)). Threonine 111 is modified (phosphothreonine). Residues 123–158 (QVLDSKTPKPEDIDEEEDDVPDLVENFDEASKNEAN) form a disordered region. Positions 134–150 (DIDEEEDDVPDLVENFD) are enriched in acidic residues.

The protein belongs to the NAC-beta family.

This chain is Transcription factor BTF3 homolog 4 (BTF3L4), found in Bos taurus (Bovine).